The following is a 512-amino-acid chain: MDQPAGLQVDYVFRGVEHAVRVMVSGQVLELEVEDRMTADQWRGEFDAGFIEDLTHKTGNFKQFNIFCHMLESALTQSSESVTLDLLTYTDLESLRNRKMGGRPGSLAPRSAQLNSKRYLILIYSVEFDRIHYPLPLPYQGKPDPVVLQGIIRSLKEELGRLQGLDGQNTRDTRENEIWHLREQVSRLASEKRELEAQLGRSREEALAGRAARQEAEALRGLVRGLELELRQERGLGHRVAGRRGQDCRRLAKELEEAKASERSLRARLKTLTSELALYKRGRRTPPVQPPPTREDRASSSRERSASRGRGAARSSSRESGRGSRGRGRPARPSPSPTGGRALRFDPTAFVKAKERKQREIQMKQQQRNRLGSGGSGDGPSVSWSRQTQPPAALTGRGDAPNRSRNRSSSVDSFRSRCSSASSCSDLEDFSESLSRGGHRRRGKPPSPTPWSGSNMKSPPVERSHHQKSLANSGGWVPIKEYSSEHQAADMAEIDARLKALQEYMNRLDMRS.

Position 1 is an N-acetylmethionine (methionine 1). Residues 1 to 143 are head domain; sequence MDQPAGLQVD…PLPLPYQGKP (143 aa). Coiled-coil stretches lie at residues 178-205 and 248-275; these read IWHL…SREE and CRRL…LTSE. The tract at residues 276–477 is disordered; the sequence is LALYKRGRRT…KSLANSGGWV (202 aa). Threonine 285 bears the Phosphothreonine mark. The segment covering 293-306 has biased composition (basic and acidic residues); it reads TREDRASSSRERSA. Residues serine 334, serine 336, serine 373, and serine 376 each carry the phosphoserine modification. The span at 407-425 shows a compositional bias: low complexity; sequence RSSSVDSFRSRCSSASSCS. 2 positions are modified to phosphoserine: serine 447 and serine 473.

Belongs to the CCDC61 family. As to quaternary structure, forms homodimers (via head domain). Interacts with CEP170. Interacts with PCM1 and CEP131. Binds tubulin.

The protein resides in the cytoplasm. It is found in the cytoskeleton. It localises to the microtubule organizing center. Its subcellular location is the centrosome. The protein localises to the centriolar satellite. The protein resides in the cilium basal body. In terms of biological role, microtubule-binding centrosomal protein required for centriole cohesion, independently of the centrosome-associated protein/CEP250 and rootletin/CROCC linker. In interphase, required for anchoring microtubule at the mother centriole subdistal appendages and for centrosome positioning. During mitosis, may be involved in spindle assembly and chromatin alignment by regulating the organization of spindle microtubules into a symmetrical structure. Has been proposed to play a role in CEP170 recruitment to centrosomes. However, this function could not be confirmed. Plays a non-essential role in ciliogenesis. This chain is Centrosomal protein CCDC61, found in Homo sapiens (Human).